A 35-amino-acid polypeptide reads, in one-letter code: Photosystem II reaction center protein Y (35 aa).

The Lumenal segment spans residues 1 to 4 (MDTR). A helical membrane pass occupies residues 5–23 (LLVVLLPVATAAAWALFNI). Residues 24–35 (GRLALQQLKRMS) are Stromal-facing.

The protein belongs to the PsbY family. In terms of assembly, PSII is composed of 1 copy each of membrane proteins PsbA, PsbB, PsbC, PsbD, PsbE, PsbF, PsbH, PsbI, PsbJ, PsbK, PsbL, PsbM, PsbT, PsbX, PsbY, PsbZ, Psb30/Ycf12, at least 3 peripheral proteins of the oxygen-evolving complex and a large number of cofactors. It forms dimeric complexes.

The protein resides in the plastid. Its subcellular location is the chloroplast thylakoid membrane. Its function is as follows. Loosely associated component of the core of photosystem II (PSII), it is not always seen in crystals. PSII is a light-driven water plastoquinone oxidoreductase, using light energy to abstract electrons from H(2)O, generating a proton gradient subsequently used for ATP formation. The polypeptide is Photosystem II reaction center protein Y (Emiliania huxleyi (Coccolithophore)).